A 397-amino-acid polypeptide reads, in one-letter code: Odorant receptor 98a (397 aa).

Over 1 to 43 (MLFNYLRKPNPTNLLTSPDSFRYFEYGMFCMGWHTPATHKIIY) the chain is Cytoplasmic. The chain crosses the membrane as a helical span at residues 44–64 (YITSCLIFAWCAVYLPIGIII). Over 65–77 (SFKTDINTFTPNE) the chain is Extracellular. The helical transmembrane segment at 78–98 (LLTVMQLFFNSVGMPFKVLFF) threads the bilayer. Residues 99-138 (NLYISGFYKAKKLLSEMDKRCTTLKERVEVHQGVVRCNKA) are Cytoplasmic-facing. The chain crosses the membrane as a helical span at residues 139-159 (YLIYQFIYTAYTISTFLSAAL). At 160–192 (SGKLPWRIYNPFVDFRESRSSFWKAALNETALM) the chain is on the extracellular side. A glycan (N-linked (GlcNAc...) asparagine) is linked at Asn187. The helical transmembrane segment at 193-213 (LFAVTQTLMSDIYPLLYGLIL) threads the bilayer. Topologically, residues 214-266 (RVHLKLLRLRVESLCTDSGKSDAENEQDLIKCIKDHNLIIDYAAAIRPAVTRT) are cytoplasmic. The chain crosses the membrane as a helical span at residues 267–287 (IFVQFLLIGICLGLSMINLLF). The Extracellular segment spans residues 288 to 293 (FADIWT). Residues 294-314 (GLATVAYINGLMVQTFPFCFV) form a helical membrane-spanning segment. The Cytoplasmic segment spans residues 315–354 (CDLLKKDCELLVSAIFHSNWINSSRSYKSSLRYFLKNAQK). The chain crosses the membrane as a helical span at residues 355–375 (SIAFTAGSIFPISTGSNIKVA). Residues 376–397 (KLAFSVVTFVNQLNIADRLTKN) lie on the Extracellular side of the membrane.

This sequence belongs to the insect chemoreceptor superfamily. Heteromeric odorant receptor channel (TC 1.A.69) family. Or2a subfamily. In terms of assembly, interacts with Orco. Complexes exist early in the endomembrane system in olfactory sensory neurons (OSNs), coupling these complexes to the conserved ciliary trafficking pathway. In terms of tissue distribution, expressed in olfactory sensory neurons in the antenna.

It localises to the cell membrane. Its function is as follows. Odorant receptor which mediates acceptance or avoidance behavior, depending on its substrates. The odorant receptor repertoire encodes a large collection of odor stimuli that vary widely in identity, intensity, and duration. May form a complex with Orco to form odorant-sensing units, providing sensitive and prolonged odorant signaling and calcium permeability. This Drosophila melanogaster (Fruit fly) protein is Odorant receptor 98a (Or98a).